The sequence spans 360 residues: Variable large protein 14 (360 aa).

Positions 1-18 (MRKRISAIIMTLFMVLAS) are cleaved as a signal peptide. Cys19 carries N-palmitoyl cysteine lipidation. The S-diacylglycerol cysteine moiety is linked to residue Cys19.

It belongs to the variable large protein (Vlp) family. Beta subfamily.

It is found in the cell outer membrane. Functionally, the Vlp and Vsp proteins are antigenically distinct proteins, only one vlp or vsp gene is transcriptionally active at any one time. Switching between these genes is a mechanism of host immune response evasion. The protein is Variable large protein 14 of Borrelia hermsii.